A 181-amino-acid chain; its full sequence is MTVPCAALVLALGLAFGQSSQGNDEESEYSGQSITEEENSEDETTRSALATVTTEALAENVNSTHTNDTSNQVEFILMVAIPLAALLILLFMVLIATYFKSKRPKQEPSSQGSQSALQTHELGGETLKVPIFEEDTPSVMEIEMEELDKWMNSMNRNADYECLPTLKEEKEPNPSPSDNES.

An N-terminal signal peptide occupies residues 1–22 (MTVPCAALVLALGLAFGQSSQG). The disordered stretch occupies residues 19–47 (SSQGNDEESEYSGQSITEEENSEDETTRS). Residues 23 to 74 (NDEESEYSGQSITEEENSEDETTRSALATVTTEALAENVNSTHTNDTSNQVE) lie on the Extracellular side of the membrane. The chain crosses the membrane as a helical span at residues 75–95 (FILMVAIPLAALLILLFMVLI). Over 96-181 (ATYFKSKRPK…PNPSPSDNES (86 aa)) the chain is Cytoplasmic. Residues 103–122 (RPKQEPSSQGSQSALQTHEL) are disordered. The segment covering 107-118 (EPSSQGSQSALQ) has biased composition (polar residues). Phosphotyrosine is present on Tyr160. A disordered region spans residues 161-181 (ECLPTLKEEKEPNPSPSDNES). A Phosphoserine modification is found at Ser177.

The protein localises to the membrane. This chain is Transmembrane protein 154 (Tmem154), found in Mus musculus (Mouse).